The following is a 925-amino-acid chain: Neuronal PAS domain-containing protein 3 (925 aa).

The bHLH domain maps to leucine 58–arginine 111. The segment at lysine 60–arginine 71 is DNA-binding. Disordered regions lie at residues proline 119–glutamine 138 and leucine 219–leucine 257. In terms of domain architecture, PAS 1 spans glutamate 152–glycine 222. The span at alanine 234 to serine 256 shows a compositional bias: low complexity. A PAS 2 domain is found at proline 324–glycine 394. Residues threonine 398–proline 441 enclose the PAC domain. 3 disordered regions span residues proline 457–leucine 555, proline 576–histidine 645, and asparagine 664–asparagine 774. 2 stretches are compositionally biased toward basic and acidic residues: residues glutamate 484–asparagine 493 and aspartate 529–glutamate 549. Residues lysine 601–leucine 622 show a composition bias toward basic residues. Polar residues predominate over residues asparagine 680–proline 690. Gly residues-rich tracts occupy residues glycine 700–alanine 710 and glycine 760–glycine 771.

In terms of assembly, efficient DNA binding requires dimerization with another bHLH protein. Interacts with ARNT; forms a heterodimer that binds core DNA sequence 5'-[AG]CGTG-3' within the hypoxia response element (HRE) of target gene promoters. In terms of tissue distribution, detected exclusively in adult brain in inhibitory interneurons.

It is found in the nucleus. Functionally, may play a broad role in neurogenesis. May control regulatory pathways relevant to schizophrenia and to psychotic illness. The protein is Neuronal PAS domain-containing protein 3 (Npas3) of Mus musculus (Mouse).